Consider the following 472-residue polypeptide: Alkaline phosphatase (472 aa).

The N-terminal stretch at 1–21 (MKQSAIALALLSCLITPVSQA) is a signal peptide. Aspartate 74 serves as a coordination point for Mg(2+). Aspartate 74 serves as a coordination point for Zn(2+). Serine 125 acts as the Phosphoserine intermediate in catalysis. Residues aspartate 176 and threonine 178 each contribute to the Mg(2+) site. Intrachain disulfides connect cysteine 191-cysteine 201 and cysteine 309-cysteine 359. Glutamate 345 is a binding site for Mg(2+). Zn(2+) is bound by residues aspartate 350, histidine 354, aspartate 392, histidine 393, and histidine 435.

It belongs to the alkaline phosphatase family. In terms of assembly, homodimer. It depends on Mg(2+) as a cofactor. Zn(2+) serves as cofactor.

It localises to the periplasm. The enzyme catalyses a phosphate monoester + H2O = an alcohol + phosphate. This Escherichia fergusonii (strain ATCC 35469 / DSM 13698 / CCUG 18766 / IAM 14443 / JCM 21226 / LMG 7866 / NBRC 102419 / NCTC 12128 / CDC 0568-73) protein is Alkaline phosphatase (phoA).